The sequence spans 721 residues: S-adenosyl-L-methionine-dependent tRNA 4-demethylwyosine synthase TYW1 (721 aa).

A Flavodoxin-like domain is found at 71–229 (VKIFYGSQTG…DFTAWKTKFI (159 aa)). Residues 77-81 (SQTGT) and 168-200 (VFGLGDSAYRSHFNKVSTNVDKWLWMLGAQRVL) contribute to the FMN site. Disordered stretches follow at residues 242 to 291 (ACGG…ELGT) and 305 to 339 (DLGNIMNPVKREKREKSHQDGKAAMQRNPEKTEDG). The segment covering 250 to 274 (GKCESAQHGPGEARPHPQGELHPGD) has biased composition (basic and acidic residues). Over residues 275–290 (AEEEEPCESSSEDELG) the composition is skewed to acidic residues. A compositionally biased stretch (basic and acidic residues) spans 313 to 325 (VKREKREKSHQDG). Residues 389-635 (YGIESHRCME…LLPDYEVACE (247 aa)) form the Radical SAM core domain. [4Fe-4S] cluster is bound by residues C405, C409, and C412.

This sequence belongs to the TYW1 family. The cofactor is [4Fe-4S] cluster.

It carries out the reaction N(1)-methylguanosine(37) in tRNA(Phe) + pyruvate + S-adenosyl-L-methionine = 4-demethylwyosine(37) in tRNA(Phe) + 5'-deoxyadenosine + L-methionine + CO2 + H2O. It participates in tRNA modification; wybutosine-tRNA(Phe) biosynthesis. Functionally, probable component of the wybutosine biosynthesis pathway. Wybutosine is a hyper modified guanosine with a tricyclic base found at the 3'-position adjacent to the anticodon of eukaryotic phenylalanine tRNA. Catalyzes the condensation of N-methylguanine with 2 carbon atoms from pyruvate to form the tricyclic 4-demethylwyosine, an intermediate in wybutosine biosynthesis. The chain is S-adenosyl-L-methionine-dependent tRNA 4-demethylwyosine synthase TYW1 (Tyw1) from Mus musculus (Mouse).